Consider the following 356-residue polypeptide: UDP-N-acetylglucosamine--N-acetylmuramyl-(pentapeptide) pyrophosphoryl-undecaprenol N-acetylglucosamine transferase (356 aa).

The UDP-N-acetyl-alpha-D-glucosamine site is built by Arg166, Ser196, and Gln290.

The protein belongs to the glycosyltransferase 28 family. MurG subfamily.

It is found in the cell membrane. It carries out the reaction Mur2Ac(oyl-L-Ala-gamma-D-Glu-L-Lys-D-Ala-D-Ala)-di-trans,octa-cis-undecaprenyl diphosphate + UDP-N-acetyl-alpha-D-glucosamine = beta-D-GlcNAc-(1-&gt;4)-Mur2Ac(oyl-L-Ala-gamma-D-Glu-L-Lys-D-Ala-D-Ala)-di-trans,octa-cis-undecaprenyl diphosphate + UDP + H(+). It participates in cell wall biogenesis; peptidoglycan biosynthesis. Functionally, cell wall formation. Catalyzes the transfer of a GlcNAc subunit on undecaprenyl-pyrophosphoryl-MurNAc-pentapeptide (lipid intermediate I) to form undecaprenyl-pyrophosphoryl-MurNAc-(pentapeptide)GlcNAc (lipid intermediate II). This chain is UDP-N-acetylglucosamine--N-acetylmuramyl-(pentapeptide) pyrophosphoryl-undecaprenol N-acetylglucosamine transferase, found in Staphylococcus aureus (strain MRSA252).